Consider the following 4367-residue polypeptide: Guanylate cyclase (4367 aa).

Polar residues predominate over residues 1 to 10; the sequence is MKKTRTTAAE. The interval 1–70 is disordered; sequence MKKTRTTAAE…MSFLQGKHQQ (70 aa). Residues 1 to 150 are Cytoplasmic-facing; that stretch reads MKKTRTTAAE…FKNLWEQFHR (150 aa). Basic and acidic residues predominate over residues 19-33; that stretch reads PHDEHRGRGREHGGA. Over residues 54–63 the composition is skewed to polar residues; that stretch reads HQATQKQMSF. Residues 151–171 traverse the membrane as a helical segment; the sequence is VINWWFLVMAIIQAIPQLHYN. At 172–174 the chain is on the extracellular side; the sequence is PNH. A helical transmembrane segment spans residues 175-195; sequence AWSTALPFAIVLVFGMLKDAF. Topologically, residues 196–373 are cytoplasmic; the sequence is TDLGRRERDR…GFKRPHIEKD (178 aa). Residues 374–394 form a helical membrane-spanning segment; sequence INTYLFISFFIVFLTILISVM. Topologically, residues 395–452 are extracellular; the sequence is SKWSVQERDSGDTGVTDAGASSGSGSSSGETSQTYGSSVEFMLGSRDLLQNPWMSILR. The disordered stretch occupies residues 402 to 426; that stretch reads RDSGDTGVTDAGASSGSGSSSGETS. A compositionally biased stretch (low complexity) spans 407–426; it reads TGVTDAGASSGSGSSSGETS. A helical transmembrane segment spans residues 453–473; the sequence is FLAVYAPVLPLSLPLILDVVY. Topologically, residues 474 to 2258 are cytoplasmic; that stretch reads LLQSVLIEGD…VHGRLSLMRV (1785 aa). Disordered regions lie at residues 486–535, 550–699, 831–918, 932–966, 980–1047, 1079–1164, 1344–1593, 1607–1652, 1773–1861, and 1881–1946; these read IRGG…QQPL, SEKF…ISGR, ETSA…ASSL, RLEETGSQKEEDSRSDRVSLSPSEGRVSGSRPQLA, VGIQ…GELS, GMSF…MPAV, PSGT…SLKS, FRRG…TGTG, GGRG…GLRS, and DKQH…PQHL. Positions 523-535 are enriched in polar residues; the sequence is AHSSQNASLQQPL. Basic and acidic residues-rich tracts occupy residues 605 to 628 and 670 to 679; these read ETLRADAEGAQERDREAEGNREQL and RRSDDRDRKS. Low complexity predominate over residues 850–863; the sequence is SAASSRSQSAPASA. A compositionally biased stretch (polar residues) spans 880–892; that stretch reads QTLTNQQTGQQSP. The segment covering 906–917 has biased composition (low complexity); that stretch reads ASPGAADSPASS. The span at 932–948 shows a compositional bias: basic and acidic residues; that stretch reads RLEETGSQKEEDSRSDR. Residues 983 to 996 are compositionally biased toward low complexity; the sequence is QSQHSSQSLLSSRQ. Residues 1025 to 1047 are compositionally biased toward basic and acidic residues; the sequence is DRMYSRDYHRESRSSSPRDGELS. Composition is skewed to polar residues over residues 1084 to 1094 and 1117 to 1130; these read SRPSSQFTFSS and RSLTPPSERGTASP. Residues 1344–1357 show a composition bias toward low complexity; that stretch reads PSGTSASSGAPSGP. Composition is skewed to gly residues over residues 1370–1381 and 1389–1400; these read QGQGHGSLGAPG and CLGGAGGSGARG. Over residues 1443–1454 the composition is skewed to pro residues; the sequence is VPSPRPLSPAGP. The span at 1527–1542 shows a compositional bias: basic and acidic residues; the sequence is SFKEKHEEFAFSKDED. The span at 1543–1567 shows a compositional bias: acidic residues; the sequence is TATVDQDDTQSATDEEHDVEGEEEE. Over residues 1583–1593 the composition is skewed to low complexity; it reads SASASLMSLKS. Composition is skewed to polar residues over residues 1628–1652, 1779–1791, and 1843–1852; these read GRSSSVERAQQPPTHGGFSTVTGTG, VSLSRLQSNSSAK, and VNPSGQTYSQ. Over residues 1881–1922 the composition is skewed to basic and acidic residues; sequence DKQHQRGHGPEGDEGSHELEGHDAHTGDSHGGHHRDQAEPRA. A compositionally biased stretch (polar residues) spans 1933-1942; that stretch reads RLPQKTQNRL. The helical transmembrane segment at 2259-2279 threads the bilayer; sequence STVILWSFFKSLCIGLPTFLF. The Extracellular segment spans residues 2280 to 2289; it reads QPQAFWSAVE. The helical transmembrane segment at 2290-2310 threads the bilayer; it reads VYDPLLLMIVDFFWTTLPGII. Over 2311-2343 the chain is Cytoplasmic; that stretch reads HGYSDQDLPTHLLPSVPVLYTPGRRRLYFNGFR. Residues 2344-2364 form a helical membrane-spanning segment; that stretch reads FILWTVEGIIYSFLIFYLLQA. Topologically, residues 2365–2376 are extracellular; sequence TWMDGNTFHDGQ. Residues 2377-2397 traverse the membrane as a helical segment; sequence VLGFHSYGILLLFGSLLQSNV. At 2398 to 2408 the chain is on the cytoplasmic side; that stretch reads RIILETSLWTP. A helical transmembrane segment spans residues 2409–2429; it reads TFLFTTIVLCTIMFFPTVLLY. Topologically, residues 2430–2444 are extracellular; the sequence is SVTGWPRRYMELAGR. Residues 2445–2465 form a helical membrane-spanning segment; it reads VVFAWPMLYFLIPLWVSIGIL. Residues 2466–2724 lie on the Cytoplasmic side of the membrane; sequence VQLLLQVFTS…LKRLVPWYRV (259 aa). The helical transmembrane segment at 2725-2745 threads the bilayer; it reads IFMLIALYQLLSFLTEYFIDI. Over 2746–2762 the chain is Extracellular; it reads HWNPGETEMEPWMCVPT. The chain crosses the membrane as a helical span at residues 2763–2783; the sequence is LVVEIGFAAVVVCTFYDFIFL. The Cytoplasmic segment spans residues 2784–2785; the sequence is DH. Residues 2786 to 2806 form a helical membrane-spanning segment; the sequence is FSLILNSIVFLMVSSSIVFYT. Topologically, residues 2807–2823 are extracellular; that stretch reads ASHVDGTLTSVLFPVFT. The chain crosses the membrane as a helical span at residues 2824–2844; the sequence is FVILRISFLQAVVWNILFLIV. Residues 2845 to 2858 are Cytoplasmic-facing; the sequence is TVARFMLDKKYLPP. Residues 2859 to 2879 form a helical membrane-spanning segment; sequence LNFVHYIPLFIGIDVFVAFVG. Over 2880–2903 the chain is Extracellular; it reads YRLEYNQRKSFLLDYSVDASRRKQ. Residues 2904–2924 traverse the membrane as a helical segment; that stretch reads REILNTMLPSFVVDQMINSEL. At 2925-3693 the chain is on the cytoplasmic side; sequence NEEGIPTSLK…RTHFYNNKSN (769 aa). The region spanning 2942-3150 is the Guanylate cyclase 1 domain; that stretch reads SVIFCDVYEF…DTVNTASRMK (209 aa). 6 disordered regions span residues 3214-3245, 3359-3402, 3456-3475, 3485-3508, 3523-3596, and 3620-3653; these read DVISETGGQNGESRRSTASLPRQLETAGASSG, GQTE…SRFD, SGDEQAAGESSEADHDEVPL, QAREANEQESAKRSGGDAPPHTPT, GCAA…ETEK, and FRRRKPAAPSEAASPSSADTPMDSRVSPTSVDDE. Positions 3383–3402 are enriched in basic and acidic residues; the sequence is RADRRPAGRREDSRGDSRFD. 3 stretches are compositionally biased toward basic and acidic residues: residues 3485–3499, 3529–3541, and 3549–3569; these read QAREANEQESAKRSG, EEEKTAKEGRESE, and TESRDANGQRVSERDASDARE. Over residues 3626–3637 the composition is skewed to low complexity; sequence AAPSEAASPSSA. Residues 3694-3714 form a helical membrane-spanning segment; that stretch reads INTIEQALIIFLVTFCVQTLT. Topologically, residues 3715 to 3736 are extracellular; the sequence is RLALPRFYVVCSHHTINLHVCT. The chain crosses the membrane as a helical span at residues 3737 to 3757; the sequence is GLYWAVRATYTLAAFVLWMLF. Residues 3758–3772 lie on the Cytoplasmic side of the membrane; that stretch reads HYRNRKEVATCLELR. Residues 3773 to 3793 traverse the membrane as a helical segment; sequence WMVFLLNLLFISASCVFALSN. Over 3794–3895 the chain is Extracellular; it reads SWGVCGQQQE…GSDLVTANGR (102 aa). A helical transmembrane segment spans residues 3896–3916; the sequence is AYTYWLLSDTIELFFYIVILH. Residues 3917–3921 are Cytoplasmic-facing; it reads HNTGL. Residues 3922-3942 form a helical membrane-spanning segment; it reads LFQNCILVDVLLMTMSLTFII. The Extracellular portion of the chain corresponds to 3943 to 3950; sequence TTARETAS. A helical transmembrane segment spans residues 3951–3971; sequence TVSTIATFPCYVFFNLVSAYC. Residues 3972 to 4367 are Cytoplasmic-facing; it reads KEYIDRLTFY…GSTPGSALGS (396 aa). Residues 4024 to 4159 enclose the Guanylate cyclase 2 domain; it reads TFLFADICGF…MDVLTGNMME (136 aa). 3 residues coordinate Mg(2+): Asp4029, Ile4030, and Asp4073. The disordered stretch occupies residues 4292-4367; the sequence is ASHGDSGPSD…GSTPGSALGS (76 aa). Residues 4333-4344 are compositionally biased toward basic and acidic residues; the sequence is DGLKQLRKEIER. The span at 4356–4367 shows a compositional bias: polar residues; that stretch reads DIGSTPGSALGS.

It in the N-terminal section; belongs to the cation transport ATPase (P-type) (TC 3.A.3) family. Type IV subfamily. This sequence in the C-terminal section; belongs to the adenylyl cyclase class-4/guanylyl cyclase family. As to quaternary structure, interacts with chaperone CDC50.1; the interaction regulates guanylate cyclase GC trafficking and sensing environmental changes. Interacts with UGO; the interaction regulates guanylate cyclase GC trafficking and catalytic activity. Requires Mg(2+) as cofactor. It depends on Mn(2+) as a cofactor.

Its subcellular location is the cell membrane. It carries out the reaction GTP = 3',5'-cyclic GMP + diphosphate. Catalyzes the synthesis of the second messenger cGMP from GTP. During the tachyzoite lytic growth cycle in host cells, detects and transduces environmental changes in potassium, phosphatidic acid and pH levels. By producing cGMP in response to these environmental changes, activates PKG and thereby regulates PKG-dependent microneme secretion which is essential for tachyzoite motility, host cell attachment invasion of and egress from host cells. May play a role in the fission of connected tachyzoites at their basal pole during egress. Does not display flippase activity towards phosphatidylserine, phosphatidic acid or phosphatidylcholine. In Toxoplasma gondii (strain ATCC 50853 / GT1), this protein is Guanylate cyclase.